A 435-amino-acid chain; its full sequence is Maltodextrin transport system permease protein MdxF (435 aa).

The next 8 helical transmembrane spans lie at 35–55, 73–93, 136–156, 199–219, 234–254, 293–313, 337–357, and 403–423; these read LLFL…GIQA, FMLI…MFYI, AYIM…FVAL, VIWT…TALF, IFLF…SNMF, LIMI…TGVL, HITF…QYTF, and VAAA…LIAF. In terms of domain architecture, ABC transmembrane type-1 spans 195–422; the sequence is LGWTVIWTIC…FIVIGISLIA (228 aa).

The protein belongs to the binding-protein-dependent transport system permease family. MalFG subfamily. The complex is composed of two ATP-binding proteins (MsmX), two transmembrane proteins (MdxF and MdxG) and a solute-binding protein (MdxE).

It localises to the cell membrane. Functionally, part of the ABC transporter complex involved in maltodextrin import. Probably responsible for the translocation of the substrate across the membrane. This Bacillus subtilis (strain 168) protein is Maltodextrin transport system permease protein MdxF (mdxF).